Reading from the N-terminus, the 75-residue chain is Putative DNA-directed RNA polymerase subunit omega (75 aa).

Belongs to the RNA polymerase subunit omega family.

Its subcellular location is the plastid. It is found in the chloroplast. The enzyme catalyses RNA(n) + a ribonucleoside 5'-triphosphate = RNA(n+1) + diphosphate. Its function is as follows. May be involved in RNA polymerase activity. This Pyropia yezoensis (Susabi-nori) protein is Putative DNA-directed RNA polymerase subunit omega.